The primary structure comprises 173 residues: Rubredoxin-2 (173 aa).

2 consecutive Rubredoxin-like domains span residues 2-53 and 119-170; these read ASYK…FMLI and YLKW…YVLY. Residues C6, C9, C39, C42, C124, C127, C157, and C160 each contribute to the Fe cation site.

The protein belongs to the rubredoxin family. The cofactor is Fe(3+).

Its subcellular location is the cytoplasm. Its pathway is hydrocarbon metabolism; alkane degradation. In terms of biological role, involved in the hydrocarbon hydroxylating system, which transfers electrons from NADH to rubredoxin reductase and then through rubredoxin to alkane 1 monooxygenase. This is Rubredoxin-2 (alkG) from Ectopseudomonas oleovorans (Pseudomonas oleovorans).